Reading from the N-terminus, the 61-residue chain is Small ribosomal subunit protein uS14 (61 aa).

4 residues coordinate Zn(2+): Cys24, Cys27, Cys40, and Cys43.

Belongs to the universal ribosomal protein uS14 family. Zinc-binding uS14 subfamily. In terms of assembly, part of the 30S ribosomal subunit. Contacts proteins S3 and S10. Zn(2+) serves as cofactor.

Binds 16S rRNA, required for the assembly of 30S particles and may also be responsible for determining the conformation of the 16S rRNA at the A site. In Anaeromyxobacter dehalogenans (strain 2CP-1 / ATCC BAA-258), this protein is Small ribosomal subunit protein uS14.